The sequence spans 519 residues: 3-octaprenyl-4-hydroxybenzoate carboxy-lyase (519 aa).

Asn177 contacts Mn(2+). Residues 180 to 182 (IYR), 194 to 196 (RWL), and 199 to 200 (RG) contribute to the prenylated FMN site. Mn(2+) is bound at residue Glu243. Asp318 (proton donor) is an active-site residue.

Belongs to the UbiD family. As to quaternary structure, homohexamer. Prenylated FMN serves as cofactor. Mn(2+) is required as a cofactor.

The protein resides in the cell membrane. The enzyme catalyses a 4-hydroxy-3-(all-trans-polyprenyl)benzoate + H(+) = a 2-(all-trans-polyprenyl)phenol + CO2. It participates in cofactor biosynthesis; ubiquinone biosynthesis. In terms of biological role, catalyzes the decarboxylation of 3-octaprenyl-4-hydroxy benzoate to 2-octaprenylphenol, an intermediate step in ubiquinone biosynthesis. The sequence is that of 3-octaprenyl-4-hydroxybenzoate carboxy-lyase from Burkholderia thailandensis (strain ATCC 700388 / DSM 13276 / CCUG 48851 / CIP 106301 / E264).